Consider the following 39-residue polypeptide: Contryphan-Cal4 (39 aa).

A signal peptide spans 1-20 (MTRTAVLLLTLLFLVAMAAS). Cys29 and Cys35 are joined by a disulfide.

Expressed by the venom duct.

It localises to the secreted. Functionally, probable neurotoxin. The polypeptide is Contryphan-Cal4 (Californiconus californicus (California cone)).